The primary structure comprises 296 residues: MKGNIYSLFVLIAAFFWGTTGTVQALAPESATPLAFGAFRLLIGGSAMLLAVWISRELHVKNWAWPLVFLAAVCMACYQPLFFTAVKETGIAVGTVIAIGSAPIIAGTLEWAVLKKRPRNSWWIATVLALAGCWLLFSDSSNVRIDVAGVLMALGAGASFAGYTLISKAMMKTQPPRATSAVVFMISAILLTPLLWQLDISWILTPRGLGTSLYIGLIATCAAYFLFAKGLTGVPASAAVTLSLAEPLTASLLGVFFIGEMLSPSSWLGIALMMLGLLVISAAPRKQKTAEAAHMS.

10 helical membrane passes run 8 to 28, 34 to 54, 63 to 83, 89 to 109, 121 to 141, 147 to 167, 183 to 203, 208 to 228, 238 to 258, and 261 to 281; these read LFVL…ALAP, LAFG…AVWI, WAWP…PLFF, TGIA…AGTL, SWWI…SDSS, VAGV…TLIS, VFMI…ISWI, GLGT…FLFA, AAVT…VFFI, and MLSP…LVIS. 2 consecutive EamA domains span residues 15-138 and 158-282; these read FFWG…LLFS and ASFA…VISA.

It belongs to the EamA transporter family.

It localises to the cell membrane. This is an uncharacterized protein from Bacillus subtilis (strain 168).